The primary structure comprises 301 residues: CPX chromosomal region candidate gene 1 protein (301 aa).

The disordered stretch occupies residues 1-77 (MSYPTKEGSD…ENSELETEIQ (77 aa)). The segment covering 44 to 60 (VETNPINREPGTATSQE) has biased composition (polar residues).

Expressed in a variety of fetal tissues.

This is CPX chromosomal region candidate gene 1 protein (CPXCR1) from Homo sapiens (Human).